The primary structure comprises 553 residues: Tether containing UBX domain for GLUT4 (553 aa).

Ala2 is modified (N-acetylalanine). Positions 182–202 (PGSLGSSASAGQAAASAPLPL) are enriched in low complexity. The interval 182–324 (PGSLGSSASA…REPVDREPVV (143 aa)) is disordered. A Phosphoserine modification is found at Ser184. The span at 206 to 217 (ELSRGDLSRPED) shows a compositional bias: basic and acidic residues. Positions 260–280 (RPLTSSSAKLPKSLSSPGGPS) are enriched in low complexity. At Ser275 the chain carries Phosphoserine. A compositionally biased stretch (basic and acidic residues) spans 296-324 (EQERERDPQQEQERERPVDREPVDREPVV). An interaction with GLUT4 region spans residues 317–380 (PVDREPVVCH…LVTKAFREAQ (64 aa)). Residues 386–462 (ERYPKVALRV…NLFPAALVHL (77 aa)) enclose the UBX domain. Residues 499 to 536 (GSPSPLPAPDPAPKSEPAAEEGALVPPEPIPGTAQPVK) form a disordered region. A phosphoserine mark is found at Ser500 and Ser502. Residues 502 to 512 (SPLPAPDPAPK) are compositionally biased toward pro residues.

Interacts with GLUT4. Interacts with VCPKMT. Interacts with VCP. As to expression, ubiquitous. Highly expressed in testis, heart, skeletal muscle and pancreas.

The protein localises to the endomembrane system. The protein resides in the endoplasmic reticulum-Golgi intermediate compartment membrane. It is found in the cytoplasm. It localises to the nucleus. In terms of biological role, tethering protein that sequesters GLUT4-containing vesicles in the cytoplasm in the absence of insulin. Modulates the amount of GLUT4 that is available at the cell surface. Enhances VCP methylation catalyzed by VCPKMT. The protein is Tether containing UBX domain for GLUT4 (ASPSCR1) of Homo sapiens (Human).